A 35-amino-acid chain; its full sequence is MQVNDLGFIATILFVLVPTVFLLILYIQTRKETEG.

A helical transmembrane segment spans residues 7–27 (GFIATILFVLVPTVFLLILYI).

The protein belongs to the PsbM family. PSII is composed of 1 copy each of membrane proteins PsbA, PsbB, PsbC, PsbD, PsbE, PsbF, PsbH, PsbI, PsbJ, PsbK, PsbL, PsbM, PsbT, PsbX, PsbY, PsbZ, Psb30/Ycf12, peripheral proteins PsbO, CyanoQ (PsbQ), PsbU, PsbV and a large number of cofactors. It forms dimeric complexes.

It localises to the cellular thylakoid membrane. One of the components of the core complex of photosystem II (PSII). PSII is a light-driven water:plastoquinone oxidoreductase that uses light energy to abstract electrons from H(2)O, generating O(2) and a proton gradient subsequently used for ATP formation. It consists of a core antenna complex that captures photons, and an electron transfer chain that converts photonic excitation into a charge separation. This subunit is found at the monomer-monomer interface. The protein is Photosystem II reaction center protein M of Gloeothece citriformis (strain PCC 7424) (Cyanothece sp. (strain PCC 7424)).